Reading from the N-terminus, the 985-residue chain is Translation initiation factor IF-2 (985 aa).

3 stretches are compositionally biased toward basic and acidic residues: residues 49 to 58 (QYGKKQEKSS), 65 to 89 (IQREHGRGQGMEDKKEKDQLFRPDN), and 99 to 113 (VPNRPPDRRYEDKAK). A disordered region spans residues 49–401 (QYGKKQEKSS…QQSAPPPILD (353 aa)). Over residues 125–136 (SKTTTNSENEQT) the composition is skewed to polar residues. Positions 137–162 (APRQGSAQQSGQGRPQANRPQGSQGR) are enriched in low complexity. 2 stretches are compositionally biased toward gly residues: residues 180–246 (PQGG…GQGR) and 288–324 (PQGGQGRPYGDRPQGGQGRHYGDRPQGGQGRPQGAGR). Residues 349–377 (KAPDKTKGDRRKNYEKDGKWADGQIEKNK) are compositionally biased toward basic and acidic residues. Residues 378-391 (LFKGRNNKNKKRQH) show a composition bias toward basic residues. The tr-type G domain occupies 485–654 (LRPPVVTIMG…LLVAEVHELK (170 aa)). Residues 494–501 (GHVDHGKT) are G1. Position 494–501 (494–501 (GHVDHGKT)) interacts with GTP. A G2 region spans residues 519–523 (GITQH). Positions 540–543 (DTPG) are G3. GTP-binding positions include 540–544 (DTPGH) and 594–597 (NKMD). The G4 stretch occupies residues 594-597 (NKMD). Positions 630–632 (SAK) are G5.

The protein belongs to the TRAFAC class translation factor GTPase superfamily. Classic translation factor GTPase family. IF-2 subfamily.

The protein localises to the cytoplasm. One of the essential components for the initiation of protein synthesis. Protects formylmethionyl-tRNA from spontaneous hydrolysis and promotes its binding to the 30S ribosomal subunits. Also involved in the hydrolysis of GTP during the formation of the 70S ribosomal complex. This chain is Translation initiation factor IF-2, found in Desulforamulus reducens (strain ATCC BAA-1160 / DSM 100696 / MI-1) (Desulfotomaculum reducens).